A 243-amino-acid polypeptide reads, in one-letter code: DNA repair protein RecO (243 aa).

It belongs to the RecO family.

Its function is as follows. Involved in DNA repair and RecF pathway recombination. This is DNA repair protein RecO from Azoarcus sp. (strain BH72).